A 314-amino-acid polypeptide reads, in one-letter code: Probable cell division protein WhiA (314 aa).

The segment at residues 274–308 is a DNA-binding region (H-T-H motif); the sequence is SLKELGEMVSTGPISKSGVNHRLRKLNDLADKIRN.

It belongs to the WhiA family.

Its function is as follows. Involved in cell division and chromosome segregation. This chain is Probable cell division protein WhiA, found in Staphylococcus aureus (strain USA300).